We begin with the raw amino-acid sequence, 941 residues long: Isoleucine--tRNA ligase (941 aa).

Positions 58–68 (PYANGNIHIGH) match the 'HIGH' region motif. Glu-564 is an L-isoleucyl-5'-AMP binding site. Residues 605 to 609 (KMSKS) carry the 'KMSKS' region motif. ATP is bound at residue Lys-608. Residues Cys-904, Cys-907, Cys-924, and Cys-927 each coordinate Zn(2+).

This sequence belongs to the class-I aminoacyl-tRNA synthetase family. IleS type 1 subfamily. As to quaternary structure, monomer. It depends on Zn(2+) as a cofactor.

Its subcellular location is the cytoplasm. It catalyses the reaction tRNA(Ile) + L-isoleucine + ATP = L-isoleucyl-tRNA(Ile) + AMP + diphosphate. In terms of biological role, catalyzes the attachment of isoleucine to tRNA(Ile). As IleRS can inadvertently accommodate and process structurally similar amino acids such as valine, to avoid such errors it has two additional distinct tRNA(Ile)-dependent editing activities. One activity is designated as 'pretransfer' editing and involves the hydrolysis of activated Val-AMP. The other activity is designated 'posttransfer' editing and involves deacylation of mischarged Val-tRNA(Ile). This Buchnera aphidicola subsp. Cinara cedri (strain Cc) protein is Isoleucine--tRNA ligase.